The chain runs to 112 residues: Large ribosomal subunit protein uL22 (112 aa).

The protein belongs to the universal ribosomal protein uL22 family. In terms of assembly, part of the 50S ribosomal subunit.

Functionally, this protein binds specifically to 23S rRNA; its binding is stimulated by other ribosomal proteins, e.g. L4, L17, and L20. It is important during the early stages of 50S assembly. It makes multiple contacts with different domains of the 23S rRNA in the assembled 50S subunit and ribosome. In terms of biological role, the globular domain of the protein is located near the polypeptide exit tunnel on the outside of the subunit, while an extended beta-hairpin is found that lines the wall of the exit tunnel in the center of the 70S ribosome. This Sorangium cellulosum (strain So ce56) (Polyangium cellulosum (strain So ce56)) protein is Large ribosomal subunit protein uL22.